A 1794-amino-acid polypeptide reads, in one-letter code: Non-reducing polyketide synthase nscA (1794 aa).

Positions 19–256 (DLKDLFRRLH…PLPVYDGLCH (238 aa)) are N-terminal acylcarrier protein transacylase domain (SAT). Residues 389–822 (ASKLAIVGMA…GGNTTVLLED (434 aa)) enclose the Ketosynthase family 3 (KS3) domain. Residues 427-448 (PDRFDLNTHYDPTGKTENATQT) form a disordered region. The span at 428–440 (DRFDLNTHYDPTG) shows a compositional bias: basic and acidic residues. Active-site for beta-ketoacyl synthase activity residues include C562, H697, and H740. Residues 928-1249 (FTGQGAYYSG…LVTLHLAGLT (322 aa)) are malonyl-CoA:ACP transacylase (MAT) domain. The interval 1314-1633 (TSLVHQITAE…RLLMDRFFSP (320 aa)) is product template (PT) domain. The N-terminal hotdog fold stretch occupies residues 1318–1454 (HQITAETVEA…GVVRFEDPAA (137 aa)). One can recognise a PKS/mFAS DH domain in the interval 1318–1628 (HQITAETVEA…FRRVPRLLMD (311 aa)). The Proton acceptor; for dehydratase activity role is filled by H1350. The interval 1482–1628 (ASKLSKPLAY…FRRVPRLLMD (147 aa)) is C-terminal hotdog fold. The active-site Proton donor; for dehydratase activity is D1539. Disordered regions lie at residues 1637–1665 (SHAEKQLQETAPSATSVKKSTPPAAEAPA) and 1682–1718 (ASKSEVSTPPLTPPSQQESPGESAVITPATSDRGDPV). 2 stretches are compositionally biased toward polar residues: residues 1644–1655 (QETAPSATSVKK) and 1685–1701 (SEVSTPPLTPPSQQESP). One can recognise a Carrier domain in the interval 1717 to 1794 (PVDAGVVGQC…EMTAWLEEYC (78 aa)). S1754 carries the post-translational modification O-(pantetheine 4'-phosphoryl)serine.

Pantetheine 4'-phosphate is required as a cofactor.

Its pathway is secondary metabolite biosynthesis. In terms of biological role, non-reducing polyketide synthase; part of the gene cluster that mediates the biosynthesis of neosartoricin, a prenylated anthracenone that exhibits T-cell antiproliferative activity, suggestive of a physiological role as an immunosuppressive agent. The non-reducing polyketide synthase nscA probably synthesizes and cyclizes the decaketide backbone. The hydrolase nscB then mediates the product release through hydrolysis followed by spontaneous decarboxylation. The prenyltransferase nscD catalyzes the addition of the dimethylallyl group to the aromatic C5. The FAD-dependent monooxygenase nscC is then responsible for the stereospecific hydroxylation at C2. There is no gene encoding O-acetyltransferase in the nsc gene cluster; thus, the last step of 2-O-acetylation leading to neosartoricin may be catalyzed by an unidentified O-acetyltransferase. The polypeptide is Non-reducing polyketide synthase nscA (Neosartorya fischeri (strain ATCC 1020 / DSM 3700 / CBS 544.65 / FGSC A1164 / JCM 1740 / NRRL 181 / WB 181) (Aspergillus fischerianus)).